Reading from the N-terminus, the 262-residue chain is 7alpha-hydroxysteroid dehydrogenase (262 aa).

Residues 13-18, R38, 63-64, and N90 contribute to the NADP(+) site; these read SSTRGI and NA. 2 residues coordinate taurochenodeoxycholate: T145 and Y158. Residues Y158, K162, and 191-195 each bind NADP(+); that span reads IGTRA. Catalysis depends on Y158, which acts as the Proton acceptor.

The protein belongs to the short-chain dehydrogenases/reductases (SDR) family. As to quaternary structure, homotetramer. A dynamic equilibrium between dimers and tetramers seems to exist.

It catalyses the reaction cholate + NADP(+) = 3alpha,12alpha-dihydroxy-7-oxo-5beta-cholanate + NADPH + H(+). It carries out the reaction chenodeoxycholate + NADP(+) = 7-oxolithocholate + NADPH + H(+). The catalysed reaction is 3alpha,7alpha-dihydroxy-12-oxo-5beta-cholanate + NADP(+) = 7,12-dioxo-lithocholate + NADPH + H(+). The enzyme catalyses 7alpha-hydroxy-3,12-dioxo-5beta-cholanate + NADP(+) = dehydrocholate + NADPH + H(+). It catalyses the reaction glycochenodeoxycholate + NADP(+) = 7-oxoglycolithocholate + NADPH + H(+). It carries out the reaction taurochenodeoxycholate + NADP(+) = 7-oxotaurolithocholate + NADPH + H(+). Activated by metal ions such as Mg(2+), Na(+) and K(+). In terms of biological role, 7alpha-hydroxysteroid dehydrogenase that catalyzes the NADP(+)-dependent oxidation of the 7alpha-hydroxy group of 7alpha-hydroxysteroids, such as cholate, chenodeoxycholate, glycochenodeoxycholate and taurochenodeoxycholate, to the corresponding 7-oxosteroids. Is also able to catalyze the reverse reduction reactions. Together with 7beta-HSDH encoded in the adjacent gene, is likely involved in the epimerization of the hydroxy group at C-7 of primary bile acids through 7-keto bile acid intermediates. The protein is 7alpha-hydroxysteroid dehydrogenase of Clostridium sardiniense (Clostridium absonum).